A 135-amino-acid polypeptide reads, in one-letter code: MATIQQLIRKGRKKIKYNSKSPALGGCPQRRGICTKVTTMKPRKPNSSMKKVAKVRLSNGKEVNVYIPGEGHNLQEHSAVLIQGGGVNDLPGINYRIIRGTLDTAGVNGRIQSRSRYGAKKGAAKQAAAAKSKKK.

Position 89 is a 3-methylthioaspartic acid (D89). Positions 114-135 are disordered; that stretch reads RSRYGAKKGAAKQAAAAKSKKK. A compositionally biased stretch (low complexity) spans 124-135; the sequence is AKQAAAAKSKKK.

It belongs to the universal ribosomal protein uS12 family. Part of the 30S ribosomal subunit. Contacts proteins S8 and S17. May interact with IF1 in the 30S initiation complex.

Its function is as follows. With S4 and S5 plays an important role in translational accuracy. Functionally, interacts with and stabilizes bases of the 16S rRNA that are involved in tRNA selection in the A site and with the mRNA backbone. Located at the interface of the 30S and 50S subunits, it traverses the body of the 30S subunit contacting proteins on the other side and probably holding the rRNA structure together. The combined cluster of proteins S8, S12 and S17 appears to hold together the shoulder and platform of the 30S subunit. This chain is Small ribosomal subunit protein uS12, found in Amoebophilus asiaticus (strain 5a2).